The chain runs to 466 residues: SVGFKAGVKDYKLTYYTPEYETKPTDILAAFRVTPQPGVPPEEAGAAVAAESSTGTWTTVWTDGLTSLDRYKGRCYHIEPVAGEESQFIAYVAYPLDLFEEGSVTNMFTSIVGNVFGFKALRALRLEDLRIPPAYTKTFQGPPHGIQVERDKLNKYGRPLLGCTIKPKLGLSAKNYGRAVYECLRGGLDFTKDDENVNSQPFMRWRDRFLFCAEAIFKSQAETGEIKGHYLNATAGTCEEMMKRAIFARELGVPIVMHDYLTGGFTANTSLAQYCRDNGLLLHIHRAMHAVIDRQKNHGMHFRVLAKALRMSGGDHIHAGTVVGKLEGEREITLGFVDLLRDDFVEKDRSRGIYFTQDWVSLPGVLPVASGGIHVWHMPALTEIFGDDSVLQFGGGTLGHPWGNAPGAVANRVALEACVQARNEGRDLAREGNEIIRAASKWSPELAAACEVWKEIKFEFPAMDTL.

Lys-5 bears the N6,N6,N6-trimethyllysine mark. Substrate-binding residues include Asn-114 and Thr-164. Catalysis depends on Lys-166, which acts as the Proton acceptor. Lys-168 serves as a coordination point for substrate. Lys-192, Asp-194, and Glu-195 together coordinate Mg(2+). Lys-192 bears the N6-carboxylysine mark. His-285 acts as the Proton acceptor in catalysis. The substrate site is built by Arg-286, His-318, and Ser-370.

Belongs to the RuBisCO large chain family. Type I subfamily. Heterohexadecamer of 8 large chains and 8 small chains; disulfide-linked. The disulfide link is formed within the large subunit homodimers. Requires Mg(2+) as cofactor. Post-translationally, the disulfide bond which can form in the large chain dimeric partners within the hexadecamer appears to be associated with oxidative stress and protein turnover.

It is found in the plastid. The protein resides in the chloroplast. It catalyses the reaction 2 (2R)-3-phosphoglycerate + 2 H(+) = D-ribulose 1,5-bisphosphate + CO2 + H2O. The catalysed reaction is D-ribulose 1,5-bisphosphate + O2 = 2-phosphoglycolate + (2R)-3-phosphoglycerate + 2 H(+). RuBisCO catalyzes two reactions: the carboxylation of D-ribulose 1,5-bisphosphate, the primary event in carbon dioxide fixation, as well as the oxidative fragmentation of the pentose substrate in the photorespiration process. Both reactions occur simultaneously and in competition at the same active site. In Vitis aestivalis (Grape), this protein is Ribulose bisphosphate carboxylase large chain.